We begin with the raw amino-acid sequence, 530 residues long: Polyprotein pp62 (530 aa).

It belongs to the asfivirus polyprotein pp62 family. Monomer. Predominantly exists as a monomer, with very little dimers. Homodimerization seems to be linked to low pH. In terms of assembly, homodimer; disulfide-linked. Homotrimer; disulfide-linked. Homohexamer. Post-translationally, monoubiquitinated in vitro by viral UBCv1. In terms of processing, specific enzymatic cleavages in vivo yield mature proteins.

It is found in the host cytoplasm. The protein resides in the host perinuclear region. Its subcellular location is the virion. In terms of biological role, essential for the correct assembly and maturation of the core of the virion. Its function is as follows. Component of the core shell. Binds to phosphatidylserine, which may enable the core shell binding with the inner membrane. Functionally, component of the core shell. Binds to phosphatidylserine and DNA, which may link the core shell to the inner membrane and to the viral nucleoid. Component of the core shell. The polypeptide is Polyprotein pp62 (Ornithodoros (relapsing fever ticks)).